A 69-amino-acid chain; its full sequence is Alternative ribosome-rescue factor A (69 aa).

This sequence belongs to the alternative ribosome-rescue factor A family. As to quaternary structure, interacts with the 70S ribosome and release factor 2.

Rescues ribosomes stalled at the 3' end of non-stop mRNAs. Recruits release factor 2 (RF2) to the stalled ribosome, helping position it correctly in the ribosomal A site so its GGQ motif can hydrolyze the peptidyl-tRNA bond. The chain is Alternative ribosome-rescue factor A (arfA) from Haemophilus influenzae (strain ATCC 51907 / DSM 11121 / KW20 / Rd).